A 202-amino-acid chain; its full sequence is ATP-dependent Clp protease proteolytic subunit (202 aa).

Ser-101 acts as the Nucleophile in catalysis. Residue His-126 is part of the active site.

Belongs to the peptidase S14 family. As to quaternary structure, component of the chloroplastic Clp protease core complex.

Its subcellular location is the plastid. It localises to the chloroplast stroma. It carries out the reaction Hydrolysis of proteins to small peptides in the presence of ATP and magnesium. alpha-casein is the usual test substrate. In the absence of ATP, only oligopeptides shorter than five residues are hydrolyzed (such as succinyl-Leu-Tyr-|-NHMec, and Leu-Tyr-Leu-|-Tyr-Trp, in which cleavage of the -Tyr-|-Leu- and -Tyr-|-Trp bonds also occurs).. Functionally, cleaves peptides in various proteins in a process that requires ATP hydrolysis. Has a chymotrypsin-like activity. Plays a major role in the degradation of misfolded proteins. In Nuphar advena (Common spatterdock), this protein is ATP-dependent Clp protease proteolytic subunit.